Reading from the N-terminus, the 320-residue chain is Polyprenyl transferase pyr6 (320 aa).

Transmembrane regions (helical) follow at residues 22–42, 60–80, 101–121, 127–147, 155–175, and 186–206; these read KYNC…AAAS, GLAF…NDWI, LATR…VWLM, GQNL…YPFG, LGIY…LPAW, and PDLL…TIYF. The N-linked (GlcNAc...) asparagine glycan is linked to Asn-224. The chain crosses the membrane as a helical span at residues 233–253; sequence YVHGLLLLQAVAVVMVIPWIL. Residue Asn-256 is glycosylated (N-linked (GlcNAc...) asparagine). The next 2 membrane-spanning stretches (helical) occupy residues 260–280 and 296–316; these read WLWF…LYLF and FALG…VSGS.

It belongs to the UbiA prenyltransferase family. The cofactor is Mg(2+).

Its subcellular location is the membrane. The enzyme catalyses 4-hydroxy-6-(pyridin-3-yl)-2H-pyran-2-one + (2E,6E)-farnesyl diphosphate = 4-hydroxy-3-[(2E,6E)-farnesyl]-6-(pyridin-3-yl)-2H-pyran-2-one + diphosphate. Its pathway is secondary metabolite biosynthesis; terpenoid biosynthesis. Polyprenyl transferase; part of the gene cluster that mediates the biosynthesis of pyripyropene A, a specific human acyl-coenzyme A:cholesterol acyltransferase 2 inhibitor. The first step of the pathway is the synthesis of nicotinyl-CoA from nicotinic acid by the nicotinic acid-CoA ligase pyr1. Nicotinyl-CoA is then a substrate of polyketide synthase pyr2 to produce 4-hydroxy-6-(3-pyridinyl)-2H-pyran-2-one (HPPO) which is further prenylated by the polyprenyl transferase pyr6 to yield farnesyl-HPPO. The next steps consist of an epoxidation of farnesyl-HPPO to epoxyfarnesyl-HPPO by FAD-dependent monooxygenase pyr5 and a cyclization of the terpenoid portion by the terpene cyclase pyr4 to yield deacetyl-pyripyropene E. The 2 cytochrome P450 monooxygenases pyr3 and pyr9, and the 2 acetyltransferases pyr7 and pyr8 are involved in the conversion of deacetyl-pyripyropene E into pyripyropene A through several cycles of oxidation and acetylation steps. Pyr7 acetylates deacetyl-pyripyropene E to pyripyropene E which is oxidized to 11-deacetyl-pyripyropene O by pyr3, which is in turn acetylated into pyripyropene O by pyr8. Pyripyropene O is then oxidized to deacetyl-pyripyropene A by pyr9. Deacetyl-pyripyropene A is finally acetylated to pyripyropene A by pyr8. The sequence is that of Polyprenyl transferase pyr6 from Aspergillus fumigatus (strain ATCC MYA-4609 / CBS 101355 / FGSC A1100 / Af293) (Neosartorya fumigata).